Here is a 216-residue protein sequence, read N- to C-terminus: 3-isopropylmalate dehydratase small subunit (216 aa).

It belongs to the LeuD family. LeuD type 1 subfamily. In terms of assembly, heterodimer of LeuC and LeuD.

It catalyses the reaction (2R,3S)-3-isopropylmalate = (2S)-2-isopropylmalate. Its pathway is amino-acid biosynthesis; L-leucine biosynthesis; L-leucine from 3-methyl-2-oxobutanoate: step 2/4. In terms of biological role, catalyzes the isomerization between 2-isopropylmalate and 3-isopropylmalate, via the formation of 2-isopropylmaleate. The protein is 3-isopropylmalate dehydratase small subunit of Albidiferax ferrireducens (strain ATCC BAA-621 / DSM 15236 / T118) (Rhodoferax ferrireducens).